The following is a 201-amino-acid chain: Holliday junction branch migration complex subunit RuvA (201 aa).

A domain I region spans residues 1 to 65; that stretch reads MIAYIEGRVA…EDALELYGFS (65 aa). The tract at residues 66–143 is domain II; that stretch reads GWDERQTFLV…KVESLPASAG (78 aa). Positions 143–147 are flexible linker; the sequence is GLAAG. The tract at residues 148 to 201 is domain III; it reads VPGSVLRDAVQALGNLGYAEEEAAPVLKNILKQDPDLDVSEALRAALKALAKAR.

Belongs to the RuvA family. Homotetramer. Forms an RuvA(8)-RuvB(12)-Holliday junction (HJ) complex. HJ DNA is sandwiched between 2 RuvA tetramers; dsDNA enters through RuvA and exits via RuvB. An RuvB hexamer assembles on each DNA strand where it exits the tetramer. Each RuvB hexamer is contacted by two RuvA subunits (via domain III) on 2 adjacent RuvB subunits; this complex drives branch migration. In the full resolvosome a probable DNA-RuvA(4)-RuvB(12)-RuvC(2) complex forms which resolves the HJ.

The protein localises to the cytoplasm. Its function is as follows. The RuvA-RuvB-RuvC complex processes Holliday junction (HJ) DNA during genetic recombination and DNA repair, while the RuvA-RuvB complex plays an important role in the rescue of blocked DNA replication forks via replication fork reversal (RFR). RuvA specifically binds to HJ cruciform DNA, conferring on it an open structure. The RuvB hexamer acts as an ATP-dependent pump, pulling dsDNA into and through the RuvAB complex. HJ branch migration allows RuvC to scan DNA until it finds its consensus sequence, where it cleaves and resolves the cruciform DNA. In Oleidesulfovibrio alaskensis (strain ATCC BAA-1058 / DSM 17464 / G20) (Desulfovibrio alaskensis), this protein is Holliday junction branch migration complex subunit RuvA.